Reading from the N-terminus, the 398-residue chain is Cysteine desulfurase 2 (398 aa).

Pyridoxal 5'-phosphate contacts are provided by residues 71–72 (GT), Asn-150, Gln-178, and 198–200 (SGH). Lys-201 bears the N6-(pyridoxal phosphate)lysine mark. Thr-236 serves as a coordination point for pyridoxal 5'-phosphate. The active-site Cysteine persulfide intermediate is Cys-323. [2Fe-2S] cluster is bound at residue Cys-323.

Belongs to the class-V pyridoxal-phosphate-dependent aminotransferase family. NifS/IscS subfamily. In terms of assembly, homodimer. It depends on pyridoxal 5'-phosphate as a cofactor.

It carries out the reaction (sulfur carrier)-H + L-cysteine = (sulfur carrier)-SH + L-alanine. In terms of biological role, catalyzes the removal of elemental sulfur atoms from cysteine to produce alanine. Seems to participate in the biosynthesis of the nitrogenase metalloclusters by providing the inorganic sulfur required for the Fe-S core formation. This is Cysteine desulfurase 2 from Trichormus variabilis (strain ATCC 29413 / PCC 7937) (Anabaena variabilis).